Consider the following 274-residue polypeptide: Pyrroline-5-carboxylate reductase 3 (274 aa).

A2 bears the N-acetylalanine mark.

It belongs to the pyrroline-5-carboxylate reductase family. As to quaternary structure, homodecamer; composed of 5 homodimers.

The protein resides in the cytoplasm. It catalyses the reaction L-proline + NADP(+) = (S)-1-pyrroline-5-carboxylate + NADPH + 2 H(+). The enzyme catalyses L-proline + NAD(+) = (S)-1-pyrroline-5-carboxylate + NADH + 2 H(+). Its pathway is amino-acid biosynthesis; L-proline biosynthesis; L-proline from L-glutamate 5-semialdehyde: step 1/1. Oxidoreductase that catalyzes the last step in proline biosynthesis, which corresponds to the reduction of pyrroline-5-carboxylate (P5C) to L-proline using NAD(P)H. Proline is synthesized from either glutamate or ornithine; both are converted to P5C, and then to proline via pyrroline-5-carboxylate reductases (PYCRs). PYCR3 is exclusively linked to the biosynthesis of proline from ornithine. The sequence is that of Pyrroline-5-carboxylate reductase 3 from Mus musculus (Mouse).